The primary structure comprises 434 residues: ATP-dependent protease ATPase subunit HslU (434 aa).

ATP-binding positions include isoleucine 18, 60 to 65, aspartate 247, glutamate 312, and arginine 384; that span reads GVGKTE.

Belongs to the ClpX chaperone family. HslU subfamily. As to quaternary structure, a double ring-shaped homohexamer of HslV is capped on each side by a ring-shaped HslU homohexamer. The assembly of the HslU/HslV complex is dependent on binding of ATP.

Its subcellular location is the cytoplasm. ATPase subunit of a proteasome-like degradation complex; this subunit has chaperone activity. The binding of ATP and its subsequent hydrolysis by HslU are essential for unfolding of protein substrates subsequently hydrolyzed by HslV. HslU recognizes the N-terminal part of its protein substrates and unfolds these before they are guided to HslV for hydrolysis. The sequence is that of ATP-dependent protease ATPase subunit HslU from Brucella suis (strain ATCC 23445 / NCTC 10510).